The primary structure comprises 83 residues: Vitellogenesis-inhibiting hormone (83 aa).

Intrachain disulfides connect cysteine 15/cysteine 52, cysteine 32/cysteine 48, and cysteine 35/cysteine 61.

As to expression, found in the sinus glands of both male and female. Found also in the brain; the neuroendocrine structures of the protocerebrum.

The protein resides in the secreted. Functionally, inhibits secondary vitellogenesis in females. Has no hyperglycemic or molt-inhibiting activity. This is Vitellogenesis-inhibiting hormone from Armadillidium vulgare (Pillbug).